The sequence spans 485 residues: Trigger factor (485 aa).

Residues G169–P261 form the PPIase FKBP-type domain.

The protein belongs to the FKBP-type PPIase family. Tig subfamily.

Its subcellular location is the cytoplasm. The catalysed reaction is [protein]-peptidylproline (omega=180) = [protein]-peptidylproline (omega=0). Functionally, involved in protein export. Acts as a chaperone by maintaining the newly synthesized protein in an open conformation. Functions as a peptidyl-prolyl cis-trans isomerase. The chain is Trigger factor from Trichodesmium erythraeum (strain IMS101).